Here is a 144-residue protein sequence, read N- to C-terminus: Large ribosomal subunit protein uL15 (144 aa).

Positions 1 to 53 (MRLNTLSPAEGSKHASKRLGRGIGSGLGKTGGRGHKGQKSRSGGGVRRGFEGG) are disordered. A compositionally biased stretch (gly residues) spans 21–31 (RGIGSGLGKTG).

It belongs to the universal ribosomal protein uL15 family. As to quaternary structure, part of the 50S ribosomal subunit.

Functionally, binds to the 23S rRNA. In Edwardsiella ictaluri (strain 93-146), this protein is Large ribosomal subunit protein uL15.